Reading from the N-terminus, the 37-residue chain is Large ribosomal subunit protein bL36 (37 aa).

This sequence belongs to the bacterial ribosomal protein bL36 family.

The sequence is that of Large ribosomal subunit protein bL36 from Staphylococcus aureus (strain Mu3 / ATCC 700698).